The following is a 77-amino-acid chain: Small ribosomal subunit protein uS17 (77 aa).

The protein belongs to the universal ribosomal protein uS17 family. As to quaternary structure, part of the 30S ribosomal subunit.

Functionally, one of the primary rRNA binding proteins, it binds specifically to the 5'-end of 16S ribosomal RNA. The sequence is that of Small ribosomal subunit protein uS17 from Rickettsia prowazekii (strain Madrid E).